A 526-amino-acid chain; its full sequence is Peptide chain release factor 3 (526 aa).

One can recognise a tr-type G domain in the interval 9-277 (DKRRTFAIIS…GIVEWAPKPQ (269 aa)). GTP is bound by residues 18–25 (SHPDAGKT), 86–90 (DTPGH), and 140–143 (NKLD).

It belongs to the TRAFAC class translation factor GTPase superfamily. Classic translation factor GTPase family. PrfC subfamily.

The protein resides in the cytoplasm. Increases the formation of ribosomal termination complexes and stimulates activities of RF-1 and RF-2. It binds guanine nucleotides and has strong preference for UGA stop codons. It may interact directly with the ribosome. The stimulation of RF-1 and RF-2 is significantly reduced by GTP and GDP, but not by GMP. This Shewanella woodyi (strain ATCC 51908 / MS32) protein is Peptide chain release factor 3.